Reading from the N-terminus, the 574-residue chain is Pyruvate kinase PKLR (574 aa).

Phosphoserine occurs at positions 2, 19, 26, and 43. Arginine 116 lines the substrate pocket. 4 residues coordinate K(+): asparagine 118, serine 120, aspartate 156, and threonine 157. 118–121 (NFSH) contacts ATP. Residues arginine 163 and lysine 250 each contribute to the ATP site. Serine 292 carries the post-translational modification Phosphoserine. Residue lysine 313 coordinates substrate. Glutamate 315 lines the Mn(2+) pocket. Substrate contacts are provided by glycine 338, aspartate 339, and threonine 371. Residue aspartate 339 coordinates Mn(2+). Beta-D-fructose 1,6-bisphosphate is bound by residues 475–480 (TKTGRS), tryptophan 525, arginine 532, and 559–564 (RPGSGY).

It belongs to the pyruvate kinase family. In terms of assembly, homotetramer. Mg(2+) is required as a cofactor. Requires Mn(2+) as cofactor. The cofactor is K(+).

It catalyses the reaction pyruvate + ATP = phosphoenolpyruvate + ADP + H(+). It participates in carbohydrate degradation; glycolysis; pyruvate from D-glyceraldehyde 3-phosphate: step 5/5. Its activity is regulated as follows. Allosterically activated by fructose 1,6-bisphosphate. Its function is as follows. Pyruvate kinase that catalyzes the conversion of phosphoenolpyruvate to pyruvate with the synthesis of ATP, and which plays a key role in glycolysis. In Rattus norvegicus (Rat), this protein is Pyruvate kinase PKLR (Pklr).